The primary structure comprises 87 residues: UPF0250 protein NE1487 (87 aa).

This sequence belongs to the UPF0250 family.

In Nitrosomonas europaea (strain ATCC 19718 / CIP 103999 / KCTC 2705 / NBRC 14298), this protein is UPF0250 protein NE1487.